A 513-amino-acid polypeptide reads, in one-letter code: Matrix metalloproteinase-27 (513 aa).

The first 17 residues, 1-17 (MKRLLLLFLFFITFSSA), serve as a signal peptide directing secretion. The propeptide at 18 to 98 (FPLVRMTENE…PRCGVPDVGQ (81 aa)) is activation peptide. An N-linked (GlcNAc...) asparagine glycan is attached at Asn-55. The Cysteine switch motif lies at 89–96 (PRCGVPDV). Residue Cys-91 coordinates Zn(2+). The N-linked (GlcNAc...) asparagine glycan is linked to Asn-110. Residues Asp-121 and Asp-155 each coordinate Ca(2+). Residue His-165 coordinates Zn(2+). Asp-173, Gly-174, and Val-178 together coordinate Ca(2+). His-181 contacts Zn(2+). Ca(2+)-binding residues include Gly-188 and Asp-192. His-194 serves as a coordination point for Zn(2+). The Ca(2+) site is built by Asp-196 and Glu-199. His-216 provides a ligand contact to Zn(2+). Glu-217 is an active-site residue. The Zn(2+) site is built by His-220 and His-226. 4 Hemopexin repeats span residues 276-325 (PHAC…WPSL), 326-371 (PADL…GFPG), 373-421 (VKKI…FPGI), and 422-465 (SIRV…WFQC). A disulfide bridge links Cys-279 with Cys-465. Asp-286 contributes to the Ca(2+) binding site. Residues Asp-377 and Asp-426 each coordinate Ca(2+). Asn-452 carries an N-linked (GlcNAc...) asparagine glycan. The tract at residues 466-513 (KEPKNSSFGFDINKEKAHSGGIKILYHKSLSLFIFGIVHLLKNTSIYQ) is required for retention in the endoplasmic reticulum.

This sequence belongs to the peptidase M10A family. The cofactor is Ca(2+). Requires Zn(2+) as cofactor. N-glycosylated. As to expression, expressed in B-cells. Expressed in a subset of endometrial macrophages related to menstruation and in ovarian and peritoneal endometriotic lesions (at protein level).

The protein resides in the endoplasmic reticulum. Functionally, matrix metalloproteinases degrade protein components of the extracellular matrix such as fibronectin, laminin, gelatins and/or collagens. The protein is Matrix metalloproteinase-27 (MMP27) of Homo sapiens (Human).